We begin with the raw amino-acid sequence, 85 residues long: Phosphocarrier protein HPr (85 aa).

One can recognise an HPr domain in the interval methionine 1–glutamate 85. Histidine 15 (pros-phosphohistidine intermediate) is an active-site residue.

The protein belongs to the HPr family.

It localises to the cytoplasm. In terms of biological role, general (non sugar-specific) component of the phosphoenolpyruvate-dependent sugar phosphotransferase system (sugar PTS). This major carbohydrate active-transport system catalyzes the phosphorylation of incoming sugar substrates concomitantly with their translocation across the cell membrane. The phosphoryl group from phosphoenolpyruvate (PEP) is transferred to the phosphoryl carrier protein HPr by enzyme I. Phospho-HPr then transfers it to the PTS EIIA domain. The polypeptide is Phosphocarrier protein HPr (ptsH) (Buchnera aphidicola subsp. Acyrthosiphon pisum (strain APS) (Acyrthosiphon pisum symbiotic bacterium)).